A 79-amino-acid chain; its full sequence is Aquaporin Z (79 aa).

The next 2 membrane-spanning stretches (helical) occupy residues 4–24 (LFAEFFGTYWLVFGGCGSAVF) and 33–53 (IGFAGVALAFGLTVLTMAYAV). An NPA 1 motif is present at residues 62 to 64 (NPA).

This sequence belongs to the MIP/aquaporin (TC 1.A.8) family. In terms of assembly, homotetramer.

It is found in the cell membrane. The enzyme catalyses H2O(in) = H2O(out). In terms of biological role, channel that permits osmotically driven movement of water in both directions. It is involved in the osmoregulation and in the maintenance of cell turgor during volume expansion in rapidly growing cells. It mediates rapid entry or exit of water in response to abrupt changes in osmolarity. The chain is Aquaporin Z from Flavobacterium johnsoniae (Cytophaga johnsonae).